The sequence spans 217 residues: Probable transaldolase (217 aa).

Residue lysine 83 is the Schiff-base intermediate with substrate of the active site.

Belongs to the transaldolase family. Type 3B subfamily.

The protein resides in the cytoplasm. The enzyme catalyses D-sedoheptulose 7-phosphate + D-glyceraldehyde 3-phosphate = D-erythrose 4-phosphate + beta-D-fructose 6-phosphate. Its pathway is carbohydrate degradation; pentose phosphate pathway; D-glyceraldehyde 3-phosphate and beta-D-fructose 6-phosphate from D-ribose 5-phosphate and D-xylulose 5-phosphate (non-oxidative stage): step 2/3. In terms of biological role, transaldolase is important for the balance of metabolites in the pentose-phosphate pathway. The chain is Probable transaldolase from Coprothermobacter proteolyticus (strain ATCC 35245 / DSM 5265 / OCM 4 / BT).